The following is a 283-amino-acid chain: MAITAAQVKELRDRTGAGMMDCKNALTETNGDIELAIDNMRKSGAAKAAKKAGNIAADGTILIKNGEGFAALLEVNCQTDFVAKDSNFLAFANAVLDVAAASKVTIEELKAQFEETRVALVTKIGENINVRRVEYIDGANLASYRHGERIGVVVAGEADEETLKHIAMHVAASKPEFVNPEDVPAELVEREQALQIEIAMNEGKPAEIAEKMVVGRMKKFTGEISLTGQAFIMEPKKTVGEILKEKKASVSNFIRLEVGEGIEKKEEDFAAEVAAQIAATKKA.

Positions 79–82 (TDFV) are involved in Mg(2+) ion dislocation from EF-Tu.

It belongs to the EF-Ts family.

It localises to the cytoplasm. Functionally, associates with the EF-Tu.GDP complex and induces the exchange of GDP to GTP. It remains bound to the aminoacyl-tRNA.EF-Tu.GTP complex up to the GTP hydrolysis stage on the ribosome. The polypeptide is Elongation factor Ts (Shewanella denitrificans (strain OS217 / ATCC BAA-1090 / DSM 15013)).